We begin with the raw amino-acid sequence, 485 residues long: Cyclic GMP-AMP synthase-like receptor (485 aa).

ATP-binding positions include Ser-70 and 82 to 84 (EYD). Residues Glu-82, Asp-84, and Asp-204 each coordinate Mg(2+). GTP contacts are provided by residues Asp-204 and 247 to 254 (RLSFYEQE). Positions 271 and 274 each coordinate ATP. Residues Ile-298 and Asp-304 each coordinate Mn(2+).

It belongs to the mab-21 family. It depends on Mg(2+) as a cofactor. Mn(2+) serves as cofactor.

The catalysed reaction is GTP + ATP = 2',3'-cGAMP + 2 diphosphate. The enzyme catalyses GTP + ATP = pppGp(2'-5')A + diphosphate. It carries out the reaction pppGp(2'-5')A = 2',3'-cGAMP + diphosphate. Its function is as follows. Nucleotidyltransferase that catalyzes the formation of cyclic GMP-AMP (2',3'-cGAMP) from ATP and GTP and plays a key role in innate immunity. Directly binds some unknown ligand, activating the nucleotidyltransferase activity, leading to synthesis of 2',3'-cGAMP, a second messenger that binds to and activates Sting, thereby triggering the immune response via activation of the NF-kappa-B transcription factor. In Trichogramma pretiosum (Parasitoid wasp), this protein is Cyclic GMP-AMP synthase-like receptor.